Here is a 187-residue protein sequence, read N- to C-terminus: GTP cyclohydrolase 1 (187 aa).

3 residues coordinate Zn(2+): C76, H79, and C148.

The protein belongs to the GTP cyclohydrolase I family. As to quaternary structure, toroid-shaped homodecamer, composed of two pentamers of five dimers.

It carries out the reaction GTP + H2O = 7,8-dihydroneopterin 3'-triphosphate + formate + H(+). Its pathway is cofactor biosynthesis; 7,8-dihydroneopterin triphosphate biosynthesis; 7,8-dihydroneopterin triphosphate from GTP: step 1/1. In Acetivibrio thermocellus (strain ATCC 27405 / DSM 1237 / JCM 9322 / NBRC 103400 / NCIMB 10682 / NRRL B-4536 / VPI 7372) (Clostridium thermocellum), this protein is GTP cyclohydrolase 1.